The primary structure comprises 416 residues: LysM domain-containing GPI-anchored protein 1 (416 aa).

The first 27 residues, 1-27, serve as a signal peptide directing secretion; that stretch reads MKIPEKPIFLIFVSLILASSLTFTATA. Disulfide bonds link Cys34-Cys100, Cys40-Cys163, Cys98-Cys161, and Cys100-Cys163. N-linked (GlcNAc...) asparagine glycosylation is present at Asn37. The LysM 1 domain maps to 110-157; it reads THYKTRPSDNLGSIADSVYGGLVSAEQIQEANSVNDPSLLDVGTSLVI. Residue Asn165 is glycosylated (N-linked (GlcNAc...) asparagine). A LysM 2 domain is found at 176 to 219; it reads LSYVVKEIDTLVGIARRYSTTITDLMNVNAMGAPDVSSGDILAV. 2 disulfides stabilise this stretch: Cys224–Cys256 and Cys251–Cys279. N-linked (GlcNAc...) asparagine glycosylation is present at Asn241. Residues Asn288, Asn299, and Asn310 are each glycosylated (N-linked (GlcNAc...) asparagine). The tract at residues 356-376 is disordered; the sequence is DGPGSIASSPRSSMLPGGGIL. Residue Ala391 is the site of GPI-anchor amidated alanine attachment. The propeptide at 392-416 is removed in mature form; sequence SASSVSYFFITFLISIASFSLALSS.

As to quaternary structure, interacts with peptidoglycans.

The protein resides in the cell membrane. The protein localises to the secreted. In terms of biological role, required as a cell surface receptor for peptidoglycan (PGN) elicitor signaling leading to innate immunity. Plays an essential role in detecting PGNs and restricting bacterial growth (of Pseudomonas syringae pv. tomato DC3000 for example). The sequence is that of LysM domain-containing GPI-anchored protein 1 (LYM1) from Arabidopsis thaliana (Mouse-ear cress).